The primary structure comprises 86 residues: Electron transfer flavoprotein regulatory factor 1 (86 aa).

This sequence belongs to the complex I LYR family. As to quaternary structure, homotetramer. Interacts with NDUFAB1. Interacts with ETFA. Interacts with ETFB.

The protein resides in the mitochondrion. Its function is as follows. Acts as a regulator of the electron transfer flavoprotein by promoting the removal of flavin from the ETF holoenzyme (composed of ETFA and ETFB). The polypeptide is Electron transfer flavoprotein regulatory factor 1 (Mus musculus (Mouse)).